We begin with the raw amino-acid sequence, 248 residues long: Ubiquinone biosynthesis O-methyltransferase (248 aa).

S-adenosyl-L-methionine contacts are provided by Arg41, Gly72, Asp93, and Met136.

It belongs to the methyltransferase superfamily. UbiG/COQ3 family.

The enzyme catalyses a 3-demethylubiquinol + S-adenosyl-L-methionine = a ubiquinol + S-adenosyl-L-homocysteine + H(+). It carries out the reaction a 3-(all-trans-polyprenyl)benzene-1,2-diol + S-adenosyl-L-methionine = a 2-methoxy-6-(all-trans-polyprenyl)phenol + S-adenosyl-L-homocysteine + H(+). The protein operates within cofactor biosynthesis; ubiquinone biosynthesis. Its function is as follows. O-methyltransferase that catalyzes the 2 O-methylation steps in the ubiquinone biosynthetic pathway. This chain is Ubiquinone biosynthesis O-methyltransferase, found in Bartonella bacilliformis (strain ATCC 35685 / KC583 / Herrer 020/F12,63).